We begin with the raw amino-acid sequence, 38 residues long: Potassium channel toxin alpha-KTx 3.7 (38 aa).

Cystine bridges form between C8-C28, C14-C33, and C18-C35.

It belongs to the short scorpion toxin superfamily. Potassium channel inhibitor family. Alpha-KTx 03 subfamily. As to expression, expressed by the venom gland.

It is found in the secreted. Blocks voltage-gated potassium channels Kv1.1/KCNA1 (IC(50)=0.6 nM), Kv1.2/KCNA2 (IC(50)=5.4 nM), Kv1.3/KCNA3 (IC(50)=0.014 nM) potently, and moderately block intermediate conductance calcium-activated potassium channels KCa3.1/KCNN4 (IC(50)=225 nM). Also shows activity on muscle-type nicotinic acetylcholine receptor (nAChR), since it reversibly and dose-dependently inhibits acetylcholine-induced current through mouse muscle-type nAChR heterologously expressed in Xenopus oocytes (IC(50)=1.6 uM). In Orthochirus scrobiculosus (Central Asian scorpion), this protein is Potassium channel toxin alpha-KTx 3.7.